A 504-amino-acid polypeptide reads, in one-letter code: Maturase K (504 aa).

The protein belongs to the intron maturase 2 family. MatK subfamily.

Its subcellular location is the plastid. The protein resides in the chloroplast. Its function is as follows. Usually encoded in the trnK tRNA gene intron. Probably assists in splicing its own and other chloroplast group II introns. This is Maturase K from Bombax buonopozense (Red-flowered silk cotton tree).